The primary structure comprises 38 residues: Alpha-amylase (38 aa).

It belongs to the glycosyl hydrolase 13 family. Monomer. Ca(2+) serves as cofactor. It depends on chloride as a cofactor. Expressed by the venom gland.

The protein localises to the secreted. It carries out the reaction Endohydrolysis of (1-&gt;4)-alpha-D-glucosidic linkages in polysaccharides containing three or more (1-&gt;4)-alpha-linked D-glucose units.. This chain is Alpha-amylase, found in Tityus serrulatus (Brazilian scorpion).